The primary structure comprises 197 residues: Imidazoleglycerol-phosphate dehydratase (197 aa).

This sequence belongs to the imidazoleglycerol-phosphate dehydratase family.

Its subcellular location is the cytoplasm. It catalyses the reaction D-erythro-1-(imidazol-4-yl)glycerol 3-phosphate = 3-(imidazol-4-yl)-2-oxopropyl phosphate + H2O. It participates in amino-acid biosynthesis; L-histidine biosynthesis; L-histidine from 5-phospho-alpha-D-ribose 1-diphosphate: step 6/9. This is Imidazoleglycerol-phosphate dehydratase from Pseudomonas fluorescens (strain SBW25).